The following is a 660-amino-acid chain: Pro-secreted protein ORF2 (660 aa).

A signal peptide spans 1 to 19 (MRPRPILLLLLMFLPMLPA). Disordered stretches follow at residues 18 to 43 (PAPP…GFWG) and 66 to 127 (VTAA…DVDS). The short motif at 28–33 (RRRGRR) is the Nuclear localization signal element. The segment covering 103–116 (TTAGAAPLTAVAPA) has biased composition (low complexity). Asn-137 and Asn-310 each carry an N-linked (GlcNAc...) asparagine; by host glycan. The tract at residues 368–394 (IALTLFNLADTLLGGLPTELISSAGGQ) is particle formation. Asn-562 carries an N-linked (GlcNAc...) asparagine; by host glycan. The tract at residues 585–610 (TTSLGAGPVSISAVAVLAPHSALALL) is oligomerization.

It belongs to the hepevirus capsid protein family. Homodimer. As to quaternary structure, self-assembles to form the capsid. The capsid is dominated by dimers that define the 30 morphological units. Interacts with phosphorylated protein ORF3. Interacts with host TMEM134. Interacts with host ASGR1 and ASGR2; these interactions facilitate infection of host hepatocytes. Post-translationally, cleaved by host protease in the N-terminus. In terms of processing, N-glycosylated. Not N-glycosylated. The C-terminus of the capsid protein ORF2 is truncated in non-enveloped virions shedded in feces, probably due to host proteases.

It is found in the secreted. The protein resides in the virion. Its subcellular location is the host cytoplasm. It localises to the host endoplasmic reticulum. The protein localises to the host Golgi apparatus. It is found in the host cell surface. The protein resides in the host nucleus. Its function is as follows. Plays a role in the inhibition of host antibody-mediated neutralization without blocking viral cell entry. Forms an icosahedral capsid with a T=1 symmetry and a 34 nm diameter. The capsid is composed of 60 copies linked to each other. Binds to the 5' end of the genomic RNA to mediate genome encapsidation. Binds to heparin surface proteoglycans (HSPGs) to mediate viral entry. Additionally, the interactions with host ASGR1 and ASGR2 facilitate viral infection of hepatocytes. Inhibits IFN production by blocking host TBK1-induced IRF3 phosphorylation. The nuclear form probably modulates host gene expression. The sequence is that of Pro-secreted protein ORF2 from Hepatitis E virus genotype 1 (isolate Human/Burma) (HEV-1).